We begin with the raw amino-acid sequence, 63 residues long: Large ribosomal subunit protein uL30 (63 aa).

Belongs to the universal ribosomal protein uL30 family. In terms of assembly, part of the 50S ribosomal subunit.

In Granulibacter bethesdensis (strain ATCC BAA-1260 / CGDNIH1), this protein is Large ribosomal subunit protein uL30.